The primary structure comprises 147 residues: Hemoglobin subunit epsilon (147 aa).

In terms of domain architecture, Globin spans 3-147 (HFTPEEKCII…VAIALAHKYH (145 aa)). S51 carries the phosphoserine modification. Heme b contacts are provided by H64 and H93.

This sequence belongs to the globin family. Red blood cells.

Functionally, hemoglobin epsilon chain is a beta-type chain found in early embryos. The protein is Hemoglobin subunit epsilon (HBE1) of Oryctolagus cuniculus (Rabbit).